The primary structure comprises 397 residues: MAKAKFERTKPHVNIGTIGHIDHGKTTLTAAITKVLHDKYPDLNPFTPFDEIDKAPEERQRGITISIAHVEYQTESRHYAHVDCPGHADYIKNMITGAAQMDGAILVVAATDGPMPQTREHVLLARQVGVPALVVALNKCDMVDDEELIELVEMEVRELLSEYEFPGDDIPVVRVAAFPALNGDAKWGESVLELMNAVDEYIPTPERDTEKPFLMPVEDVFTITGRGTVITGRIERGIVKVGEEVEILGIREASQKSTVTGVEMFRKLLDEGQAGENVGLLLRGTKREDVERGMVVAKPGTTTPHTNFEASVYILSKEEGGRHTPFFNNYRPQFYFRTTDVTGVVTLPEGTEMVMPGDNTEMAVELIQPIAMDEGLRFAIREGGRTVGAGRVTKITK.

A tr-type G domain is found at 10 to 206 (KPHVNIGTIG…AVDEYIPTPE (197 aa)). Residues 19 to 26 (GHIDHGKT) are G1. Residue 19 to 26 (GHIDHGKT) participates in GTP binding. T26 serves as a coordination point for Mg(2+). The segment at 62–66 (GITIS) is G2. The G3 stretch occupies residues 83–86 (DCPG). GTP contacts are provided by residues 83-87 (DCPGH) and 138-141 (NKCD). The interval 138-141 (NKCD) is G4. The tract at residues 176–178 (AAF) is G5.

It belongs to the TRAFAC class translation factor GTPase superfamily. Classic translation factor GTPase family. EF-Tu/EF-1A subfamily. As to quaternary structure, monomer.

Its subcellular location is the cytoplasm. It carries out the reaction GTP + H2O = GDP + phosphate + H(+). GTP hydrolase that promotes the GTP-dependent binding of aminoacyl-tRNA to the A-site of ribosomes during protein biosynthesis. This Nocardioides sp. (strain ATCC BAA-499 / JS614) protein is Elongation factor Tu.